Consider the following 247-residue polypeptide: Small ribosomal subunit protein uS3 (247 aa).

In terms of domain architecture, KH type-2 spans 39–111 (IYDFFDKKVR…NISIQVIELK (73 aa)). The disordered stretch occupies residues 221 to 247 (EEMDLLNAPKDRRVRRGGERHASTKKN). Basic and acidic residues predominate over residues 236–247 (RGGERHASTKKN).

This sequence belongs to the universal ribosomal protein uS3 family. As to quaternary structure, part of the 30S ribosomal subunit. Forms a tight complex with proteins S10 and S14.

Its function is as follows. Binds the lower part of the 30S subunit head. Binds mRNA in the 70S ribosome, positioning it for translation. The protein is Small ribosomal subunit protein uS3 of Metamycoplasma arthritidis (strain 158L3-1) (Mycoplasma arthritidis).